Consider the following 221-residue polypeptide: Histidine biosynthesis bifunctional protein HisIE (221 aa).

Residues 1-129 form a phosphoribosyl-AMP cyclohydrolase region; it reads MAYSKNFSIE…AKKTSPFSNI (129 aa). The interval 130–221 is phosphoribosyl-ATP pyrophosphohydrolase; sequence CSELFDTLHE…VLESRRGKNN (92 aa).

In the N-terminal section; belongs to the PRA-CH family. The protein in the C-terminal section; belongs to the PRA-PH family.

It localises to the cytoplasm. It catalyses the reaction 1-(5-phospho-beta-D-ribosyl)-ATP + H2O = 1-(5-phospho-beta-D-ribosyl)-5'-AMP + diphosphate + H(+). The enzyme catalyses 1-(5-phospho-beta-D-ribosyl)-5'-AMP + H2O = 1-(5-phospho-beta-D-ribosyl)-5-[(5-phospho-beta-D-ribosylamino)methylideneamino]imidazole-4-carboxamide. It participates in amino-acid biosynthesis; L-histidine biosynthesis; L-histidine from 5-phospho-alpha-D-ribose 1-diphosphate: step 2/9. Its pathway is amino-acid biosynthesis; L-histidine biosynthesis; L-histidine from 5-phospho-alpha-D-ribose 1-diphosphate: step 3/9. In Prochlorococcus marinus subsp. pastoris (strain CCMP1986 / NIES-2087 / MED4), this protein is Histidine biosynthesis bifunctional protein HisIE.